The following is a 287-amino-acid chain: Bifunctional protein FolD (287 aa).

Residues 171 to 173 (GHS) and I237 each bind NADP(+).

Belongs to the tetrahydrofolate dehydrogenase/cyclohydrolase family. Homodimer.

It catalyses the reaction (6R)-5,10-methylene-5,6,7,8-tetrahydrofolate + NADP(+) = (6R)-5,10-methenyltetrahydrofolate + NADPH. The enzyme catalyses (6R)-5,10-methenyltetrahydrofolate + H2O = (6R)-10-formyltetrahydrofolate + H(+). Its pathway is one-carbon metabolism; tetrahydrofolate interconversion. In terms of biological role, catalyzes the oxidation of 5,10-methylenetetrahydrofolate to 5,10-methenyltetrahydrofolate and then the hydrolysis of 5,10-methenyltetrahydrofolate to 10-formyltetrahydrofolate. The chain is Bifunctional protein FolD from Methanosarcina barkeri (strain Fusaro / DSM 804).